A 99-amino-acid polypeptide reads, in one-letter code: IEVLLGSDDGGLAFVPGNFSVSAGEKITFKNNAGFPHNVVFDEDEIPAGVDASKISMSEEDLLNGPGETYSVTLSEKGTYTFYCAPHQGAGMVGKVTVN.

A Plastocyanin-like domain is found at 1–99; the sequence is IEVLLGSDDG…AGMVGKVTVN (99 aa). Cu cation is bound by residues His-37, Cys-84, His-87, and Met-92.

It belongs to the plastocyanin family. It depends on Cu(2+) as a cofactor.

It localises to the plastid. It is found in the chloroplast thylakoid membrane. Its function is as follows. Participates in electron transfer between P700 and the cytochrome b6-f complex in photosystem I. The protein is Plastocyanin B'/B'' of Nicotiana tabacum (Common tobacco).